A 1257-amino-acid chain; its full sequence is Phosphatidylinositol 3,4,5-trisphosphate 5-phosphatase 2 (1257 aa).

Positions 21–117 (WYHRDLSRAA…GLVCALLLPV (97 aa)) constitute an SH2 domain. Residues 119 to 132 (GEREPDPPDDRDAS) show a composition bias toward basic and acidic residues. The interval 119 to 181 (GEREPDPPDD…ESTPNGLSTV (63 aa)) is disordered. Serine 132 carries the post-translational modification Phosphoserine. The span at 156–166 (PSSPLPTPETP) shows a compositional bias: pro residues. Position 165 is a phosphothreonine (threonine 165). 2 positions are modified to phosphoserine: serine 241 and serine 353. Position 887 is a phosphotyrosine (tyrosine 887). Serine 891 is modified (phosphoserine). Residues 897 to 986 (TGAKSKVPSV…PPKNSFNNPA (90 aa)) are disordered. Over residues 939–951 (PPPTGRPPAPPRA) the composition is skewed to pro residues. Residues 945–950 (PPAPPR) carry the SH3-binding motif. Positions 952–966 (VPREEPLNPRLKSEG) are enriched in basic and acidic residues. Positions 984–987 (NPAY) match the NPXY motif motif. Tyrosine 987 bears the Phosphotyrosine mark. The segment covering 999–1008 (PLEPPSLARA) has biased composition (low complexity). The tract at residues 999 to 1119 (PLEPPSLARA…FLGEVASGDD (121 aa)) is disordered. Composition is skewed to pro residues over residues 1049-1060 (LPPPDFPPPPLP) and 1088-1104 (GPPP…PPGT). Serine 1132 carries the post-translational modification Phosphoserine. The interval 1134 to 1196 (VDYAPGPGRS…PQGGRASGLG (63 aa)) is disordered. Residues tyrosine 1136 and tyrosine 1161 each carry the phosphotyrosine modification. Residues 1195–1257 (LGEAGMGAWL…LLLDTLQLSK (63 aa)) form the SAM domain. Position 1256 is a phosphoserine (serine 1256).

It belongs to the inositol 1,4,5-trisphosphate 5-phosphatase family. In terms of assembly, interacts with tyrosine phosphorylated form of SHC1. Interacts with EGFR. Upon stimulation by the EGF signaling pathway, it forms a complex with SHC1 and EGFR. Interacts with cytoskeletal protein SORBS3/vinexin, promoting its localization to the periphery of cells. Forms a complex with filamin (FLNA or FLNB), actin, GPIb (GP1BA or GP1BB) that regulates cortical and submembraneous actin. Interacts with c-Met/MET, when c-Met/MET is phosphorylated on 'Tyr-1356'. Interacts with p130Cas/BCAR1. Interacts with CENTD3/ARAP3 via its SAM domain. Interacts with c-Cbl/CBL and CAP/SORBS1. Interacts with activated EPHA2 receptor. Interacts with receptors FCGR2A. Interacts with FCGR2B. Interacts with tyrosine kinase ABL1. Interacts with tyrosine kinase TEC. Interacts with CSF1R. Interacts (via N-terminus) with SH3YL1 (via SH3 domain). Interacts (via SH2 domain) with tyrosine phosphorylated KLRC1 (via ITIM). Interacts with NEDD9/HEF1. In terms of processing, tyrosine phosphorylated by the members of the SRC family after exposure to a diverse array of extracellular stimuli such as insulin, growth factors such as EGF or PDGF, chemokines, integrin ligands and hypertonic and oxidative stress. May be phosphorylated upon IgG receptor FCGR2B-binding. Phosphorylated at Tyr-987 following cell attachment and spreading. Phosphorylated at Tyr-1161 following EGF signaling pathway stimulation. In terms of tissue distribution, widely expressed.

The protein resides in the cytoplasm. It is found in the cytosol. It localises to the cytoskeleton. The protein localises to the membrane. Its subcellular location is the cell projection. The protein resides in the filopodium. It is found in the lamellipodium. It localises to the basal cell membrane. The protein localises to the nucleus. Its subcellular location is the nucleus speckle. The protein resides in the spindle pole. The enzyme catalyses a 1,2-diacyl-sn-glycero-3-phospho-(1D-myo-inositol-3,4,5-trisphosphate) + H2O = a 1,2-diacyl-sn-glycero-3-phospho-(1D-myo-inositol-3,4-bisphosphate) + phosphate. It carries out the reaction 1,2-dioctanoyl-sn-glycero-3-phospho-(1D-myo-inositol-3,4,5-trisphosphate) + H2O = 1,2-dioctanoyl-sn-glycero-3-phospho-(1D-myo-inositol-3,4-bisphosphate) + phosphate. The catalysed reaction is 1,2-dihexadecanoyl-sn-glycero-3-phospho-(1D-myo-inositol-3,4,5-trisphosphate) + H2O = 1,2-dihexadecanoyl-sn-glycero-3-phospho-(1D-myo-inositol-3,4-bisphosphate) + phosphate. Activated upon translocation to the sites of synthesis of PtdIns(3,4,5)P3 in the membrane. Enzymatic activity is enhanced in the presence of phosphatidylserine. Functionally, phosphatidylinositol (PtdIns) phosphatase that specifically hydrolyzes the 5-phosphate of phosphatidylinositol-3,4,5-trisphosphate (PtdIns(3,4,5)P3) to produce PtdIns(3,4)P2, thereby negatively regulating the PI3K (phosphoinositide 3-kinase) pathways. Required for correct mitotic spindle orientation and therefore progression of mitosis. Plays a central role in regulation of PI3K-dependent insulin signaling, although the precise molecular mechanisms and signaling pathways remain unclear. While overexpression reduces both insulin-stimulated MAP kinase and Akt activation, its absence does not affect insulin signaling or GLUT4 trafficking. Confers resistance to dietary obesity. May act by regulating AKT2, but not AKT1, phosphorylation at the plasma membrane. Part of a signaling pathway that regulates actin cytoskeleton remodeling. Required for the maintenance and dynamic remodeling of actin structures as well as in endocytosis, having a major impact on ligand-induced EGFR internalization and degradation. Participates in regulation of cortical and submembraneous actin by hydrolyzing PtdIns(3,4,5)P3 thereby regulating membrane ruffling. Regulates cell adhesion and cell spreading. Required for HGF-mediated lamellipodium formation, cell scattering and spreading. Acts as a negative regulator of EPHA2 receptor endocytosis by inhibiting via PI3K-dependent Rac1 activation. Acts as a regulator of neuritogenesis by regulating PtdIns(3,4,5)P3 level and is required to form an initial protrusive pattern, and later, maintain proper neurite outgrowth. Acts as a negative regulator of the FC-gamma-RIIA receptor (FCGR2A). Mediates signaling from the FC-gamma-RIIB receptor (FCGR2B), playing a central role in terminating signal transduction from activating immune/hematopoietic cell receptor systems. Upon stimulation by EGF, it is recruited by EGFR and dephosphorylates PtdIns(3,4,5)P3. Plays a negative role in regulating the PI3K-PKB pathway, possibly by inhibiting PKB activity. Down-regulates Fc-gamma-R-mediated phagocytosis in macrophages independently of INPP5D/SHIP1. In macrophages, down-regulates NF-kappa-B-dependent gene transcription by regulating macrophage colony-stimulating factor (M-CSF)-induced signaling. Plays a role in the localization of AURKA and NEDD9/HEF1 to the basolateral membrane at interphase in polarized cysts, thereby mediates cell cycle homeostasis, cell polarization and cilia assembly. Additionally promotion of cilia growth is also facilitated by hydrolysis of (PtdIns(3,4,5)P3) to PtdIns(3,4)P2. Promotes formation of apical membrane-initiation sites during the initial stages of lumen formation via Rho family-induced actin filament organization and CTNNB1 localization to cell-cell contacts. May also hydrolyze PtdIns(1,3,4,5)P4, and could thus affect the levels of the higher inositol polyphosphates like InsP6. Involved in endochondral ossification. The sequence is that of Phosphatidylinositol 3,4,5-trisphosphate 5-phosphatase 2 from Mus musculus (Mouse).